A 122-amino-acid polypeptide reads, in one-letter code: Small ribosomal subunit protein uS13 (122 aa).

Residues Lys-94–Lys-122 form a disordered region.

It belongs to the universal ribosomal protein uS13 family. As to quaternary structure, part of the 30S ribosomal subunit. Forms a loose heterodimer with protein S19. Forms two bridges to the 50S subunit in the 70S ribosome.

Functionally, located at the top of the head of the 30S subunit, it contacts several helices of the 16S rRNA. In the 70S ribosome it contacts the 23S rRNA (bridge B1a) and protein L5 of the 50S subunit (bridge B1b), connecting the 2 subunits; these bridges are implicated in subunit movement. Contacts the tRNAs in the A and P-sites. This chain is Small ribosomal subunit protein uS13, found in Methylorubrum extorquens (strain PA1) (Methylobacterium extorquens).